A 100-amino-acid polypeptide reads, in one-letter code: Small ribosomal subunit protein uS14c (100 aa).

This sequence belongs to the universal ribosomal protein uS14 family. Part of the 30S ribosomal subunit.

Its subcellular location is the plastid. It localises to the chloroplast. Its function is as follows. Binds 16S rRNA, required for the assembly of 30S particles. This is Small ribosomal subunit protein uS14c from Arabis hirsuta (Hairy rock-cress).